Here is a 522-residue protein sequence, read N- to C-terminus: MSEIWEDAIKSNAWPFVEAKKILDSLNGKIPEKGYVLFETGYGPSGLPHIGTFGENARMVMVQKAFEQLSDIPTKLICFSDDMDGLRKVPSNIPNPEMVAQYMDMPLTSIPDTFGECESYGHYMNAKLRSFLDKFGFEYEFYSSTNCYKAGMFDEMLIMVLEKYDEIMELMLPTFREERKATYSPCMPICPKTGKVLQVPIEKWDAKAGTVTYKDEAGNYIEVPVTGGHCKLQWKPDFGMRWAALKVDYEMYGKDHLANARLYSEICRILGGKPPVQLCYELFLDENGEKISKSKGNSISVDDWLKCAPVESMALFMYQNPTRAKRLFFDVIPKNVDKYITFNQKYHLEEDRAKRFANPVYHIHHGNVPQIETFGITYSLLLNLTSVCNPSDKSVLWGFISKYEPKATPNTSPYLDHLAEFAIRYYNDFIKAHKSYLSPSEKHKVILQDILDMLSDIADQTEAEAIQKAIYDIGMKAGYENLRDYFKDLYQILLGQNEGPRLGTFIKLYGVQEMKKLVEGQL.

A 'HIGH' region motif is present at residues 44–52 (PSGLPHIGT). The short motif at 290–294 (KISKS) is the 'KMSKS' region element. Lysine 293 is an ATP binding site.

This sequence belongs to the class-I aminoacyl-tRNA synthetase family.

The protein localises to the cytoplasm. It catalyses the reaction tRNA(Lys) + L-lysine + ATP = L-lysyl-tRNA(Lys) + AMP + diphosphate. This is Lysine--tRNA ligase from Rickettsia massiliae (strain Mtu5).